An 839-amino-acid chain; its full sequence is Eukaryotic translation initiation factor 3 subunit C (839 aa).

The disordered stretch occupies residues 1–93 (MSRFFVAGYN…DSDSEDEGRR (93 aa)). 2 stretches are compositionally biased toward acidic residues: residues 14 to 27 (SSEE…DEEL) and 34 to 58 (GEQE…SDSD). The region spanning 585–759 (FHQHINLELL…AFIQFASTEP (175 aa)) is the PCI domain. The tract at residues 783–839 (EKTSSNGYGKKQPQQQQQQQQQQQQQQQQQKDLLQEDNSRFRYANVNTNNDEFQTTA) is disordered. Over residues 794-812 (QPQQQQQQQQQQQQQQQQQ) the composition is skewed to low complexity. The span at 827–839 (NVNTNNDEFQTTA) shows a compositional bias: polar residues.

It belongs to the eIF-3 subunit C family. As to quaternary structure, component of the eukaryotic translation initiation factor 3 (eIF-3) complex.

The protein resides in the cytoplasm. Its function is as follows. Component of the eukaryotic translation initiation factor 3 (eIF-3) complex, which is involved in protein synthesis of a specialized repertoire of mRNAs and, together with other initiation factors, stimulates binding of mRNA and methionyl-tRNAi to the 40S ribosome. The eIF-3 complex specifically targets and initiates translation of a subset of mRNAs involved in cell proliferation. The sequence is that of Eukaryotic translation initiation factor 3 subunit C from Scheffersomyces stipitis (strain ATCC 58785 / CBS 6054 / NBRC 10063 / NRRL Y-11545) (Yeast).